The following is a 277-amino-acid chain: NADPH-dependent 7-cyano-7-deazaguanine reductase (277 aa).

Residue 83–85 coordinates substrate; sequence VES. Position 85-86 (85-86) interacts with NADPH; it reads SK. Cys184 acts as the Thioimide intermediate in catalysis. Asp191 acts as the Proton donor in catalysis. 223–224 contributes to the substrate binding site; sequence HE. Residue 252-253 coordinates NADPH; sequence RG.

This sequence belongs to the GTP cyclohydrolase I family. QueF type 2 subfamily. As to quaternary structure, homodimer.

It is found in the cytoplasm. It carries out the reaction 7-aminomethyl-7-carbaguanine + 2 NADP(+) = 7-cyano-7-deazaguanine + 2 NADPH + 3 H(+). Its pathway is tRNA modification; tRNA-queuosine biosynthesis. Functionally, catalyzes the NADPH-dependent reduction of 7-cyano-7-deazaguanine (preQ0) to 7-aminomethyl-7-deazaguanine (preQ1). The polypeptide is NADPH-dependent 7-cyano-7-deazaguanine reductase (Cupriavidus taiwanensis (strain DSM 17343 / BCRC 17206 / CCUG 44338 / CIP 107171 / LMG 19424 / R1) (Ralstonia taiwanensis (strain LMG 19424))).